A 476-amino-acid polypeptide reads, in one-letter code: Eukaryotic translation initiation factor 3 subunit L (476 aa).

The 196-residue stretch at 257–452 folds into the PCI domain; it reads DAIRMFSHIL…DLDYALEKDL (196 aa).

This sequence belongs to the eIF-3 subunit L family. As to quaternary structure, component of the eukaryotic translation initiation factor 3 (eIF-3) complex.

Its subcellular location is the cytoplasm. Component of the eukaryotic translation initiation factor 3 (eIF-3) complex, which is involved in protein synthesis of a specialized repertoire of mRNAs and, together with other initiation factors, stimulates binding of mRNA and methionyl-tRNAi to the 40S ribosome. The eIF-3 complex specifically targets and initiates translation of a subset of mRNAs involved in cell proliferation. The protein is Eukaryotic translation initiation factor 3 subunit L of Aspergillus terreus (strain NIH 2624 / FGSC A1156).